Reading from the N-terminus, the 117-residue chain is Hydrogenase maturation factor HypA (117 aa).

Residue His-2 coordinates Ni(2+). Zn(2+) contacts are provided by Cys-73, Cys-76, Cys-90, and Cys-93.

It belongs to the HypA/HybF family.

Its function is as follows. Involved in the maturation of [NiFe] hydrogenases. Required for nickel insertion into the metal center of the hydrogenase. The chain is Hydrogenase maturation factor HypA from Pectobacterium atrosepticum (strain SCRI 1043 / ATCC BAA-672) (Erwinia carotovora subsp. atroseptica).